A 341-amino-acid chain; its full sequence is Gibberellin 2-beta-dioxygenase 2 (341 aa).

The 105-residue stretch at 179 to 283 (KSDSCLRLNH…RISMIYFGGP (105 aa)) folds into the Fe2OG dioxygenase domain. Residues His-207, Asp-209, and His-264 each coordinate Fe cation. The active site involves Arg-274. Arg-274 serves as a coordination point for 2-oxoglutarate.

It belongs to the iron/ascorbate-dependent oxidoreductase family. GA2OX subfamily. Fe(2+) is required as a cofactor. Preferentially expressed in flowers, siliques, and upper stems. Expressed in cotyledons, at the base of the shoot apical meristem and developing leaf primordia.

The enzyme catalyses gibberellin A1 + 2-oxoglutarate + O2 = gibberellin A8 + succinate + CO2. It participates in plant hormone biosynthesis; gibberellin biosynthesis. Its function is as follows. Catalyzes the 2-beta-hydroxylation of several biologically active gibberellins, leading to the homeostatic regulation of their endogenous level. Catabolism of gibberellins (GAs) plays a central role in plant development. Converts GA9/GA20 to GA51/GA29 and GA4/GA1 to GA34/GA8. The chain is Gibberellin 2-beta-dioxygenase 2 (GA2OX2) from Arabidopsis thaliana (Mouse-ear cress).